Consider the following 160-residue polypeptide: MDSAASHSVACHSTKMVALGLYFTVVVFVLFITSVNLQSPATKTEKTPKISRLYFGTLEYVNATKDQELIDGVFDAILKRLNKLDVDNPHEKNVGRYDMTTLLCWAVNNDLLYRKYGENMEVIFQLAKKFYPERDDKDKDSLGINRSLGTSKLLKWELHG.

Residues 17 to 37 traverse the membrane as a helical segment; sequence VALGLYFTVVVFVLFITSVNL. 2 N-linked (GlcNAc...) asparagine glycosylation sites follow: asparagine 62 and asparagine 145.

As to expression, salivary gland (at protein level).

The protein localises to the membrane. Its function is as follows. (Microbial infection) Modulates replication of Zika virus in salivary glands. In terms of biological role, (Microbial infection) Modulates replication of dengue virus type 2 in salivary glands. (Microbial infection) Modulates replication of chikungunya virus in salivary glands. This Aedes aegypti (Yellowfever mosquito) protein is Salivary gland broad-spectrum antiviral protein.